The sequence spans 267 residues: 4-hydroxy-tetrahydrodipicolinate reductase (267 aa).

8–13 (GAAGRM) serves as a coordination point for NAD(+). Arginine 35 is a binding site for NADP(+). NAD(+) is bound by residues 98-100 (GTT) and 122-125 (AANF). Catalysis depends on histidine 155, which acts as the Proton donor/acceptor. Residue histidine 156 participates in (S)-2,3,4,5-tetrahydrodipicolinate binding. Catalysis depends on lysine 159, which acts as the Proton donor. Position 165 to 166 (165 to 166 (GT)) interacts with (S)-2,3,4,5-tetrahydrodipicolinate.

Belongs to the DapB family.

It is found in the cytoplasm. It carries out the reaction (S)-2,3,4,5-tetrahydrodipicolinate + NAD(+) + H2O = (2S,4S)-4-hydroxy-2,3,4,5-tetrahydrodipicolinate + NADH + H(+). The catalysed reaction is (S)-2,3,4,5-tetrahydrodipicolinate + NADP(+) + H2O = (2S,4S)-4-hydroxy-2,3,4,5-tetrahydrodipicolinate + NADPH + H(+). It functions in the pathway amino-acid biosynthesis; L-lysine biosynthesis via DAP pathway; (S)-tetrahydrodipicolinate from L-aspartate: step 4/4. Functionally, catalyzes the conversion of 4-hydroxy-tetrahydrodipicolinate (HTPA) to tetrahydrodipicolinate. The sequence is that of 4-hydroxy-tetrahydrodipicolinate reductase from Azotobacter vinelandii (strain DJ / ATCC BAA-1303).